Consider the following 505-residue polypeptide: MVMENPFEGKEIWFGVGSQDLYGEEALRQVAIHSAEMVDYLNNTGKIPAKIVLKPTLKSSDGVKEFMVEASANPNVIGVITWCHTFSPAKMWIRGLEVLTKPLLQLATQHHKEIPWETIDMDFMNLNQAAHGDREFGYIVSRLGIKRKVVVGHYTDPEVAEKLGTWARACAGWDASNNMKVMRWGDNMRNVAVTEGDKTEAERVFGASINTWAVNELVAAYDAVKDDQVKEIIEDYKAKYDVDPALLDAKYDSLFIAAKEEAAMVNMMRANGCTAGVDNFEDLGALPQLPGVGPQRFPSEYGWGFSAEGDWKTAVLVRIGAVMGYGLEGGASLMEDYSYNFTEGDELDMGSHMLEVSPSIGTIAKPKLEIHPLGIGGKADPVRLVFSGKPAKDAVVVSMSDVRERFRLLMDVVDVVEPQGSLKELPCARAVWEPKPSLKTAVECWITAGGSHHTCMTTSVGREAWEDFARIAGVELAVIDENTTARQFEKELELSEMYHRLNNQH.

Positions 308, 335, 352, and 453 each coordinate Mn(2+).

It belongs to the arabinose isomerase family. Mn(2+) serves as cofactor.

It carries out the reaction beta-L-arabinopyranose = L-ribulose. The protein operates within carbohydrate degradation; L-arabinose degradation via L-ribulose; D-xylulose 5-phosphate from L-arabinose (bacterial route): step 1/3. Catalyzes the conversion of L-arabinose to L-ribulose. The polypeptide is L-arabinose isomerase (Bifidobacterium longum (strain DJO10A)).